The chain runs to 531 residues: Phosphomethylpyrimidine synthase (531 aa).

Residues asparagine 167, methionine 196, tyrosine 225, histidine 261, 281–283 (SRG), 322–325 (DALR), and glutamate 361 contribute to the substrate site. Histidine 365 is a binding site for Zn(2+). Residue tyrosine 388 coordinates substrate. Histidine 429 provides a ligand contact to Zn(2+). Positions 511, 514, and 519 each coordinate [4Fe-4S] cluster.

Belongs to the ThiC family. It depends on [4Fe-4S] cluster as a cofactor.

The catalysed reaction is 5-amino-1-(5-phospho-beta-D-ribosyl)imidazole + S-adenosyl-L-methionine = 4-amino-2-methyl-5-(phosphooxymethyl)pyrimidine + CO + 5'-deoxyadenosine + formate + L-methionine + 3 H(+). Its pathway is cofactor biosynthesis; thiamine diphosphate biosynthesis. In terms of biological role, catalyzes the synthesis of the hydroxymethylpyrimidine phosphate (HMP-P) moiety of thiamine from aminoimidazole ribotide (AIR) in a radical S-adenosyl-L-methionine (SAM)-dependent reaction. The protein is Phosphomethylpyrimidine synthase of Chlorobium chlorochromatii (strain CaD3).